Reading from the N-terminus, the 551-residue chain is MGEINRRNFLKVSILGAAAAAVASASAVKGMVSPLVADAADIVAPITETSEFPYKVDAKYQRYNSLKNFFEKTFDPEANKTPIKFHYDDVSKITGKKDTGKDLPTLNAERLGIKGRPATHTETSILFHTQHLGAMLTQRHNETGWTGLDEALNAGAWAVEFDYSGFNATGGGPGSVIPLYPINPMTNEIANEPVMVPGLYNWDNIDVESVRQQGQQWKFESKEEASKIVKKATRLLGADLVGIAPYDERWTYSTWGRKIYKPCKMPNGRTKYLPWDLPKMLSGGGVEVFGHAKFEPDWEKYAGFKPKSVIVFVLEEDYEAIRTSPSVISSATVGKSYSNMAEVAYKIAVFLRKLGYYAAPCGNDTGISVPMAVQAGLGEAGRNGLLITQKFGPRHRIAKVYTDLELAPDKPRKFGVREFCRLCKKCADACPAQAISHEKDPKVLQPEDCEVAENPYTEKWHLDSNRCGSFWAYNGSPCSNCVAVCSWNKVETWNHDVARVATQIPLLQDAARKFDEWFGYNGPVNPDERLESGYVQNMVKDFWNNPESIKQ.

Residues 1–39 (MGEINRRNFLKVSILGAAAAAVASASAVKGMVSPLVADA) constitute a signal peptide (tat-type signal). The 4Fe-4S ferredoxin-type 1 domain occupies 411–440 (PRKFGVREFCRLCKKCADACPAQAISHEKD). Residues cysteine 420, cysteine 423, cysteine 426, cysteine 430, cysteine 467, cysteine 478, cysteine 481, and cysteine 485 each coordinate [4Fe-4S] cluster. One can recognise a 4Fe-4S ferredoxin-type 2 domain in the interval 478 to 496 (CSNCVAVCSWNKVETWNHD).

This sequence belongs to the PceA family. [4Fe-4S] cluster serves as cofactor. Corrinoid is required as a cofactor. In terms of processing, predicted to be exported by the Tat system. The position of the signal peptide cleavage has been experimentally proven.

It is found in the cytoplasm. The protein resides in the cell membrane. Its subcellular location is the secreted. It carries out the reaction trichloroethene + chloride + A + H(+) = tetrachloroethene + AH2. The catalysed reaction is trichloroethene + AH2 = (Z)-1,2-dichloroethene + chloride + A + H(+). Its activity is regulated as follows. PceT is required as a chaperone for prePceA maturation. In the absence or presence of exogenous vitamin B12, the intracellular corrinoid level decreases in fumarate-grown cells and the PceA precursor forms catalytically inactive, corrinoid-free multiprotein aggregates. Exogenous vitamin B12 is not incorporated into the PceA precursor, even though it affects the transposition of the pce gene cluster. In terms of biological role, catalyzes the reductive dechlorination of tetrachloroethene (PCE) to trichloroethene (TCE) and of trichloroethene to cis-1,2-dichloroethene (DCE). Can also use various chlorinated ethanes such as tetrachloroethane, pentachloroethane and hexachloroethane. Reduced methyl viologen can act as the artificial electron donor. The chain is Tetrachloroethene reductive dehalogenase from Desulfitobacterium hafniense (strain Y51).